The primary structure comprises 433 residues: Gamma-glutamyl phosphate reductase (433 aa).

Belongs to the gamma-glutamyl phosphate reductase family.

It is found in the cytoplasm. The catalysed reaction is L-glutamate 5-semialdehyde + phosphate + NADP(+) = L-glutamyl 5-phosphate + NADPH + H(+). It functions in the pathway amino-acid biosynthesis; L-proline biosynthesis; L-glutamate 5-semialdehyde from L-glutamate: step 2/2. Catalyzes the NADPH-dependent reduction of L-glutamate 5-phosphate into L-glutamate 5-semialdehyde and phosphate. The product spontaneously undergoes cyclization to form 1-pyrroline-5-carboxylate. The chain is Gamma-glutamyl phosphate reductase from Cyanothece sp. (strain PCC 7425 / ATCC 29141).